A 128-amino-acid chain; its full sequence is Large ribosomal subunit protein uL22 (128 aa).

This sequence belongs to the universal ribosomal protein uL22 family. In terms of assembly, part of the 50S ribosomal subunit.

Its function is as follows. This protein binds specifically to 23S rRNA; its binding is stimulated by other ribosomal proteins, e.g. L4, L17, and L20. It is important during the early stages of 50S assembly. It makes multiple contacts with different domains of the 23S rRNA in the assembled 50S subunit and ribosome. Functionally, the globular domain of the protein is located near the polypeptide exit tunnel on the outside of the subunit, while an extended beta-hairpin is found that lines the wall of the exit tunnel in the center of the 70S ribosome. The sequence is that of Large ribosomal subunit protein uL22 from Prochlorococcus marinus subsp. pastoris (strain CCMP1986 / NIES-2087 / MED4).